The following is a 365-amino-acid chain: tRNA(Met) cytidine acetate ligase (365 aa).

ATP contacts are provided by residues 7-20, G96, N152, and R175; that span reads IAEF…HKYL.

The protein belongs to the TmcAL family.

It localises to the cytoplasm. The enzyme catalyses cytidine(34) in elongator tRNA(Met) + acetate + ATP = N(4)-acetylcytidine(34) in elongator tRNA(Met) + AMP + diphosphate. In terms of biological role, catalyzes the formation of N(4)-acetylcytidine (ac(4)C) at the wobble position of elongator tRNA(Met), using acetate and ATP as substrates. First activates an acetate ion to form acetyladenylate (Ac-AMP) and then transfers the acetyl group to tRNA to form ac(4)C34. The polypeptide is tRNA(Met) cytidine acetate ligase (Streptococcus pneumoniae serotype 19F (strain G54)).